A 92-amino-acid polypeptide reads, in one-letter code: MLMNLQFFSHHKGGGSTANGRDSAGRRLGAKRADGQTVKNGNILYRQRGTHIYPGVNVGRGGDDTLFAMADGVVRFERKGRDKRQVSVYPAK.

Residues 1–8 (MLMNLQFF) constitute a propeptide that is removed on maturation. The interval 11-30 (HKGGGSTANGRDSAGRRLGA) is disordered.

The protein belongs to the bacterial ribosomal protein bL27 family. In terms of processing, the N-terminus is cleaved by ribosomal processing cysteine protease Prp.

This is Large ribosomal subunit protein bL27 from Lactiplantibacillus plantarum (strain ATCC BAA-793 / NCIMB 8826 / WCFS1) (Lactobacillus plantarum).